Reading from the N-terminus, the 607-residue chain is Guanine nucleotide-binding protein-like 1 (607 aa).

Residues 1-14 (MPRKKPFSVKQKKK) are compositionally biased toward basic residues. The segment at 1–81 (MPRKKPFSVK…GPRGYDPNRY (81 aa)) is disordered. Residues 15 to 26 (QLQDKRERKRGL) show a composition bias toward basic and acidic residues. Phosphoserine occurs at positions 32, 33, and 34. 2 positions are modified to phosphothreonine: threonine 48 and threonine 50. Phosphoserine is present on residues serine 51 and serine 68. A CP-type G domain is found at 178–418 (WRQLWRVLEM…LCDCPGLIFP (241 aa)). 225–228 (NKVD) contributes to the GTP binding site. The residue at position 324 (serine 324) is a Phosphoserine. Residues 367–374 (GFPNVGKS) and 411–415 (DCPGL) each bind GTP. The tract at residues 547–607 (GPAGDEEEEE…PYALLGEDEC (61 aa)) is disordered. Acidic residues predominate over residues 550-584 (GDEEEEEEEELSSSCEEEGEEDRDADEEGEGDEDT). Residues serine 561, serine 562, and serine 563 each carry the phosphoserine modification.

This sequence belongs to the TRAFAC class YlqF/YawG GTPase family.

Functionally, possible regulatory or functional link with the histocompatibility cluster. The sequence is that of Guanine nucleotide-binding protein-like 1 (GNL1) from Macaca fascicularis (Crab-eating macaque).